The chain runs to 129 residues: MAKRTVATKKRVVKVDVKGQLHIHSSFNNIIVTITNDEGQVISWSSSGKMGFRSSKKNTPYAAQMAAQDCAKVAYDLGMRKVKAYVKGPGNGRESAIRMVHNVGIEVTEIIDVTPLPHNGCRPPKGRRV.

It belongs to the universal ribosomal protein uS11 family. In terms of assembly, part of the 30S ribosomal subunit. Interacts with proteins S7 and S18. Binds to IF-3.

In terms of biological role, located on the platform of the 30S subunit, it bridges several disparate RNA helices of the 16S rRNA. Forms part of the Shine-Dalgarno cleft in the 70S ribosome. In Azobacteroides pseudotrichonymphae genomovar. CFP2, this protein is Small ribosomal subunit protein uS11.